Reading from the N-terminus, the 37-residue chain is Large ribosomal subunit protein bL36c (37 aa).

Belongs to the bacterial ribosomal protein bL36 family.

It localises to the plastid. It is found in the chloroplast. The chain is Large ribosomal subunit protein bL36c from Phaeodactylum tricornutum (strain CCAP 1055/1).